Here is a 507-residue protein sequence, read N- to C-terminus: MEELQRYLKMDRSRERDFLYPLLFQEYIYALAHDFGLTKSIPYESMQILSYDNKYSSLIVKRLIIRMYQQKHLIILDNDSKNKNFLGHNKNLYSQMISEGFAVIVEIPFALRLVSSYQGKEIEKSINLGSIHSTFPFLEDKFVHLNHVLNILIPYPIHFELIVQNLRCWIQDASFLHLLRFFLYEYHNWNSFTTQKMKQNSLFLKENRRFFLFLYNFHVYESESIFLFLRKKSYHLRSTSSIAFLDRTHFFGKIEHLKVVFRNDFHTMLWLFKDPFMHYFRYQGKSIMSSKGTPLLMKKWKYYLVNLWECHFYFWSQPNRIHINQLSNIFLNFLGYLSSVRPNPSVVRNQMLENAFIIDISINKLNTLVPIIPLIGSLAKAKFCNLSGQPISKPAWTDSLDSDIIDRFGRICRNVSHYYSGSSKKKTLYRIKYILRLSCARTLARKHKSSVRSFLKRLGSEFLEEFLIEEEQVLSFILPKISSSSQRLSKERIWYFDIIRINDLMDL.

It belongs to the intron maturase 2 family. MatK subfamily.

It localises to the plastid. Its subcellular location is the chloroplast. Functionally, usually encoded in the trnK tRNA gene intron. Probably assists in splicing its own and other chloroplast group II introns. In Ranunculus repens (Creeping buttercup), this protein is Maturase K.